The primary structure comprises 301 residues: Bifunctional protein FolD (301 aa).

Residues 164 to 166, Ser191, and Ile232 contribute to the NADP(+) site; that span reads GRS.

This sequence belongs to the tetrahydrofolate dehydrogenase/cyclohydrolase family. As to quaternary structure, homodimer.

The catalysed reaction is (6R)-5,10-methylene-5,6,7,8-tetrahydrofolate + NADP(+) = (6R)-5,10-methenyltetrahydrofolate + NADPH. The enzyme catalyses (6R)-5,10-methenyltetrahydrofolate + H2O = (6R)-10-formyltetrahydrofolate + H(+). It participates in one-carbon metabolism; tetrahydrofolate interconversion. Functionally, catalyzes the oxidation of 5,10-methylenetetrahydrofolate to 5,10-methenyltetrahydrofolate and then the hydrolysis of 5,10-methenyltetrahydrofolate to 10-formyltetrahydrofolate. This chain is Bifunctional protein FolD, found in Borrelia garinii subsp. bavariensis (strain ATCC BAA-2496 / DSM 23469 / PBi) (Borreliella bavariensis).